The primary structure comprises 156 residues: Small ribosomal subunit protein uS7 (156 aa).

Belongs to the universal ribosomal protein uS7 family. As to quaternary structure, part of the 30S ribosomal subunit. Contacts proteins S9 and S11.

In terms of biological role, one of the primary rRNA binding proteins, it binds directly to 16S rRNA where it nucleates assembly of the head domain of the 30S subunit. Is located at the subunit interface close to the decoding center, probably blocks exit of the E-site tRNA. The sequence is that of Small ribosomal subunit protein uS7 from Polynucleobacter asymbioticus (strain DSM 18221 / CIP 109841 / QLW-P1DMWA-1) (Polynucleobacter necessarius subsp. asymbioticus).